Reading from the N-terminus, the 179-residue chain is Disulfide bond formation protein B (179 aa).

At Met-1–Ala-14 the chain is on the cytoplasmic side. Residues Trp-15–Tyr-31 traverse the membrane as a helical segment. Residues Phe-32–Val-49 are Periplasmic-facing. Residues Cys-41 and Cys-44 are joined by a disulfide bond. Residues Ala-50–Pro-65 form a helical membrane-spanning segment. At Asn-66–Trp-72 the chain is on the cytoplasmic side. A helical membrane pass occupies residues Leu-73 to Ile-90. At Lys-91–Glu-146 the chain is on the periplasmic side. The cysteines at positions 105 and 132 are disulfide-linked. A helical transmembrane segment spans residues Trp-147–Ser-165. At Gln-166–Arg-179 the chain is on the cytoplasmic side.

Belongs to the DsbB family.

The protein resides in the cell inner membrane. Its function is as follows. Required for disulfide bond formation in some periplasmic proteins. Acts by oxidizing the DsbA protein. This is Disulfide bond formation protein B from Haemophilus ducreyi (strain 35000HP / ATCC 700724).